Here is a 431-residue protein sequence, read N- to C-terminus: 5-methylthioadenosine/S-adenosylhomocysteine deaminase (431 aa).

Zn(2+) is bound by residues histidine 64 and histidine 66. Residues glutamate 93, arginine 145, and histidine 183 each contribute to the substrate site. Histidine 210 is a binding site for Zn(2+). Substrate-binding residues include glutamate 213 and aspartate 299. Zn(2+) is bound at residue aspartate 299.

It belongs to the metallo-dependent hydrolases superfamily. MTA/SAH deaminase family. Zn(2+) is required as a cofactor.

The catalysed reaction is S-adenosyl-L-homocysteine + H2O + H(+) = S-inosyl-L-homocysteine + NH4(+). It catalyses the reaction S-methyl-5'-thioadenosine + H2O + H(+) = S-methyl-5'-thioinosine + NH4(+). Catalyzes the deamination of 5-methylthioadenosine and S-adenosyl-L-homocysteine into 5-methylthioinosine and S-inosyl-L-homocysteine, respectively. Is also able to deaminate adenosine. The protein is 5-methylthioadenosine/S-adenosylhomocysteine deaminase of Syntrophomonas wolfei subsp. wolfei (strain DSM 2245B / Goettingen).